Here is a 75-residue protein sequence, read N- to C-terminus: Putative defensin-like protein 126 (75 aa).

The N-terminal stretch at 1-24 (MSKSTFLFVYIILILGSMVNEIQG) is a signal peptide. Disulfide bonds link Cys29/Cys73, Cys38/Cys57, Cys43/Cys67, and Cys47/Cys69.

This sequence belongs to the DEFL family.

It is found in the secreted. This chain is Putative defensin-like protein 126 (LCR6), found in Arabidopsis thaliana (Mouse-ear cress).